Consider the following 307-residue polypeptide: Elongation factor Ts (307 aa).

An involved in Mg(2+) ion dislocation from EF-Tu region spans residues 79-82; that stretch reads TDFV.

This sequence belongs to the EF-Ts family.

The protein resides in the cytoplasm. In terms of biological role, associates with the EF-Tu.GDP complex and induces the exchange of GDP to GTP. It remains bound to the aminoacyl-tRNA.EF-Tu.GTP complex up to the GTP hydrolysis stage on the ribosome. The chain is Elongation factor Ts from Bartonella tribocorum (strain CIP 105476 / IBS 506).